The chain runs to 276 residues: Large ribosomal subunit protein uL2 (276 aa).

Disordered stretches follow at residues 1–20 (MGIKKYNPTTNGRRNMTTND) and 219–276 (TVRG…RRKK). Residues 7-20 (NPTTNGRRNMTTND) show a composition bias toward polar residues.

It belongs to the universal ribosomal protein uL2 family. Part of the 50S ribosomal subunit. Forms a bridge to the 30S subunit in the 70S ribosome.

Its function is as follows. One of the primary rRNA binding proteins. Required for association of the 30S and 50S subunits to form the 70S ribosome, for tRNA binding and peptide bond formation. It has been suggested to have peptidyltransferase activity; this is somewhat controversial. Makes several contacts with the 16S rRNA in the 70S ribosome. This is Large ribosomal subunit protein uL2 from Bacillus cereus (strain G9842).